Here is a 208-residue protein sequence, read N- to C-terminus: Small ribosomal subunit protein eS8 (208 aa).

The segment at 1-23 is disordered; the sequence is MGISRDSAHKRRATGGKRKSLRK. A compositionally biased stretch (basic residues) spans 8-23; it reads AHKRRATGGKRKSLRK.

The protein belongs to the eukaryotic ribosomal protein eS8 family. In terms of assembly, component of the small ribosomal subunit. Identified in a IGF2BP1-dependent mRNP granule complex containing untranslated mRNAs. Part of the small subunit (SSU) processome, composed of more than 70 proteins and the RNA chaperone small nucleolar RNA (snoRNA) U3.

The protein resides in the cytoplasm. The protein localises to the membrane. It is found in the nucleus. It localises to the nucleolus. Functionally, component of the small ribosomal subunit. The ribosome is a large ribonucleoprotein complex responsible for the synthesis of proteins in the cell. Part of the small subunit (SSU) processome, first precursor of the small eukaryotic ribosomal subunit. During the assembly of the SSU processome in the nucleolus, many ribosome biogenesis factors, an RNA chaperone and ribosomal proteins associate with the nascent pre-rRNA and work in concert to generate RNA folding, modifications, rearrangements and cleavage as well as targeted degradation of pre-ribosomal RNA by the RNA exosome. This is Small ribosomal subunit protein eS8 (RpS8) from Drosophila melanogaster (Fruit fly).